The following is a 734-amino-acid chain: Photosystem I P700 chlorophyll a apoprotein A2 (734 aa).

Helical transmembrane passes span 46–69 (IFAS…FHVA), 135–158 (LYGG…LHLQ), 175–199 (LNHH…HVAI), 273–291 (MAHH…GHMY), 330–353 (LHFQ…QHMY), 369–395 (AALY…IFFI), 417–439 (AIIS…LYVH), and 517–535 (FLVH…LILV). The [4Fe-4S] cluster site is built by Cys559 and Cys568. A run of 2 helical transmembrane segments spans residues 575–596 (AFYL…YWHW) and 643–665 (LSVW…MFLI). Positions 654, 662, and 670 each coordinate chlorophyll a. Phylloquinone is bound at residue Trp671. Residues 707–727 (LVGLAHFSVGYIFTYAAFLIA) traverse the membrane as a helical segment.

It belongs to the PsaA/PsaB family. In terms of assembly, the PsaA/B heterodimer binds the P700 chlorophyll special pair and subsequent electron acceptors. PSI consists of a core antenna complex that captures photons, and an electron transfer chain that converts photonic excitation into a charge separation. The eukaryotic PSI reaction center is composed of at least 11 subunits. It depends on P700 is a chlorophyll a/chlorophyll a' dimer, A0 is one or more chlorophyll a, A1 is one or both phylloquinones and FX is a shared 4Fe-4S iron-sulfur center. as a cofactor.

The protein resides in the plastid. It is found in the chloroplast thylakoid membrane. The enzyme catalyses reduced [plastocyanin] + hnu + oxidized [2Fe-2S]-[ferredoxin] = oxidized [plastocyanin] + reduced [2Fe-2S]-[ferredoxin]. Functionally, psaA and PsaB bind P700, the primary electron donor of photosystem I (PSI), as well as the electron acceptors A0, A1 and FX. PSI is a plastocyanin-ferredoxin oxidoreductase, converting photonic excitation into a charge separation, which transfers an electron from the donor P700 chlorophyll pair to the spectroscopically characterized acceptors A0, A1, FX, FA and FB in turn. Oxidized P700 is reduced on the lumenal side of the thylakoid membrane by plastocyanin. This chain is Photosystem I P700 chlorophyll a apoprotein A2, found in Physcomitrium patens (Spreading-leaved earth moss).